The sequence spans 155 residues: Large ribosomal subunit protein eL24B (155 aa).

Ser7 carries the post-translational modification Phosphoserine. The interval 66–155 (EVAKKRSRKT…AFQKVAATSR (90 aa)) is disordered. Positions 89–129 (LIKERRSLKPEVRKANREEKLKANKEKKRAEKAARKAEKAK) are enriched in basic and acidic residues.

This sequence belongs to the eukaryotic ribosomal protein eL24 family. In terms of assembly, component of the large ribosomal subunit (LSU). Mature yeast ribosomes consist of a small (40S) and a large (60S) subunit. The 40S small subunit contains 1 molecule of ribosomal RNA (18S rRNA) and 33 different proteins (encoded by 57 genes). The large 60S subunit contains 3 rRNA molecules (25S, 5.8S and 5S rRNA) and 46 different proteins (encoded by 81 genes).

It localises to the cytoplasm. Its function is as follows. Component of the ribosome, a large ribonucleoprotein complex responsible for the synthesis of proteins in the cell. The small ribosomal subunit (SSU) binds messenger RNAs (mRNAs) and translates the encoded message by selecting cognate aminoacyl-transfer RNA (tRNA) molecules. The large subunit (LSU) contains the ribosomal catalytic site termed the peptidyl transferase center (PTC), which catalyzes the formation of peptide bonds, thereby polymerizing the amino acids delivered by tRNAs into a polypeptide chain. The nascent polypeptides leave the ribosome through a tunnel in the LSU and interact with protein factors that function in enzymatic processing, targeting, and the membrane insertion of nascent chains at the exit of the ribosomal tunnel. This chain is Large ribosomal subunit protein eL24B, found in Saccharomyces cerevisiae (strain ATCC 204508 / S288c) (Baker's yeast).